We begin with the raw amino-acid sequence, 239 residues long: Ribosomal RNA small subunit methyltransferase G (239 aa).

Residues glycine 77, phenylalanine 82, alanine 128–glutamate 129, and arginine 147 each bind S-adenosyl-L-methionine. Residues lysine 219 to glycine 239 form a disordered region.

The protein belongs to the methyltransferase superfamily. RNA methyltransferase RsmG family.

The protein resides in the cytoplasm. Functionally, specifically methylates the N7 position of guanine in position 535 of 16S rRNA. This is Ribosomal RNA small subunit methyltransferase G from Bacillus subtilis (strain 168).